We begin with the raw amino-acid sequence, 77 residues long: Acyl carrier protein (77 aa).

The 76-residue stretch at 2-77 (STIEERVKKV…EAIDYVVAHQ (76 aa)) folds into the Carrier domain. Position 37 is an O-(pantetheine 4'-phosphoryl)serine (serine 37).

This sequence belongs to the acyl carrier protein (ACP) family. In terms of processing, 4'-phosphopantetheine is transferred from CoA to a specific serine of apo-ACP by AcpS. This modification is essential for activity because fatty acids are bound in thioester linkage to the sulfhydryl of the prosthetic group.

The protein localises to the cytoplasm. It participates in lipid metabolism; fatty acid biosynthesis. Functionally, carrier of the growing fatty acid chain in fatty acid biosynthesis. This chain is Acyl carrier protein, found in Chromohalobacter salexigens (strain ATCC BAA-138 / DSM 3043 / CIP 106854 / NCIMB 13768 / 1H11).